Consider the following 233-residue polypeptide: Protein TIPIN homolog (233 aa).

The span at 1 to 14 shows a compositional bias: acidic residues; it reads MDEMEDFFENDELD. Disordered regions lie at residues 1 to 39 and 134 to 233; these read MDEMEDFFENDELDREPSPMGDEAIEDNSGEGGTRRVVE and GETG…NNDW. Basic and acidic residues-rich tracts occupy residues 163 to 190 and 197 to 216; these read DLFKDLPEKEVTTEKAKNSEKSDQKTAE and EEYRMMEEERLREEQEAKEA. A compositionally biased stretch (acidic residues) spans 217–227; sequence ADEDALMEDFG.

This sequence belongs to the CSM3 family.

The protein resides in the cytoplasm. Its subcellular location is the nucleus. Its function is as follows. Required for normal progression of S-phase. Important for cell survival after DNA damage or replication stress. This Caenorhabditis elegans protein is Protein TIPIN homolog.